We begin with the raw amino-acid sequence, 227 residues long: Enolase-phosphatase E1 (227 aa).

The protein belongs to the HAD-like hydrolase superfamily. MasA/MtnC family. In terms of assembly, monomer. Mg(2+) is required as a cofactor.

It catalyses the reaction 5-methylsulfanyl-2,3-dioxopentyl phosphate + H2O = 1,2-dihydroxy-5-(methylsulfanyl)pent-1-en-3-one + phosphate. The protein operates within amino-acid biosynthesis; L-methionine biosynthesis via salvage pathway; L-methionine from S-methyl-5-thio-alpha-D-ribose 1-phosphate: step 3/6. It functions in the pathway amino-acid biosynthesis; L-methionine biosynthesis via salvage pathway; L-methionine from S-methyl-5-thio-alpha-D-ribose 1-phosphate: step 4/6. Functionally, bifunctional enzyme that catalyzes the enolization of 2,3-diketo-5-methylthiopentyl-1-phosphate (DK-MTP-1-P) into the intermediate 2-hydroxy-3-keto-5-methylthiopentenyl-1-phosphate (HK-MTPenyl-1-P), which is then dephosphorylated to form the acireductone 1,2-dihydroxy-3-keto-5-methylthiopentene (DHK-MTPene). The polypeptide is Enolase-phosphatase E1 (Pseudomonas fluorescens (strain Pf0-1)).